The following is a 431-amino-acid chain: Glutamate-1-semialdehyde 2,1-aminomutase 2 (431 aa).

Position 268 is an N6-(pyridoxal phosphate)lysine (Lys268).

It belongs to the class-III pyridoxal-phosphate-dependent aminotransferase family. HemL subfamily. In terms of assembly, homodimer. Requires pyridoxal 5'-phosphate as cofactor.

It localises to the cytoplasm. The catalysed reaction is (S)-4-amino-5-oxopentanoate = 5-aminolevulinate. It participates in porphyrin-containing compound metabolism; protoporphyrin-IX biosynthesis; 5-aminolevulinate from L-glutamyl-tRNA(Glu): step 2/2. The polypeptide is Glutamate-1-semialdehyde 2,1-aminomutase 2 (Anoxybacillus flavithermus (strain DSM 21510 / WK1)).